The chain runs to 322 residues: Transcription factor WRKY45-2 (322 aa).

Residues 67–110 (GGEGSEVQSEVTCGGGASAGGKRKAPAANRKANCRRRTQQSSGN) are disordered. Positions 112 to 180 (VVVKNLDDGQ…YIGEHTCRDP (69 aa)) form a DNA-binding region, WRKY. The interval 256–284 (SDQEEVLSSLTPGSSAARGGGVAGPFGPD) is disordered.

This sequence belongs to the WRKY group III family. As to expression, expressed in aleurone cells.

It localises to the nucleus. Functionally, transcriptional activator involved in defense responses against pathogens. Acts as a positive regulator of defense responses against the rice blast fungus Magnaporthe oryzae. Acts as a positive regulator of defense responses against the bacterial blight Xanthomonas oryzae pv oryzae (Xoo) and the bacterial streak Xanthomonas oryzae pv oryzicola (Xoc). Acts as a positive regulator of abscisic acid (ABA) signaling that suppresses growth of seedlings. Acts as a negative regulator of salt stress response. Acts as a negative regulator of cold stress response. Acts as a negative regulator of drought stress response. This is Transcription factor WRKY45-2 from Oryza sativa subsp. indica (Rice).